The sequence spans 1146 residues: DNA polymerase II large subunit (1146 aa).

Belongs to the archaeal DNA polymerase II family. In terms of assembly, heterodimer of a large subunit and a small subunit.

The enzyme catalyses DNA(n) + a 2'-deoxyribonucleoside 5'-triphosphate = DNA(n+1) + diphosphate. It carries out the reaction Exonucleolytic cleavage in the 3'- to 5'-direction to yield nucleoside 5'-phosphates.. Its function is as follows. Possesses two activities: a DNA synthesis (polymerase) and an exonucleolytic activity that degrades single-stranded DNA in the 3'- to 5'-direction. Has a template-primer preference which is characteristic of a replicative DNA polymerase. This is DNA polymerase II large subunit from Methanosarcina barkeri (strain Fusaro / DSM 804).